A 1340-amino-acid polypeptide reads, in one-letter code: Pleckstrin homology domain-containing family G member 2 (1340 aa).

Polar residues predominate over residues 34–44 (TPTAQAATTMA). Residues 34–76 (TPTAQAATTMASPRGSGSSTSLSTVGSEGDPSPACSASRPEPL) are disordered. Low complexity predominate over residues 45–62 (SPRGSGSSTSLSTVGSEG). A DH domain is found at 98–279 (RLERVAREIV…TAVAWYINDM (182 aa)). Positions 309–407 (ELVLEGTFRG…WIHCLQRLFF (99 aa)) constitute a PH domain. Disordered stretches follow at residues 431 to 623 (PKSK…IPCI), 684 to 743 (LPGP…SVQG), 820 to 855 (MQRAETRASTNAPRRRPRVLAQPQPSPCPPQEEAEP), 907 to 979 (NVSD…PSAG), 991 to 1028 (TTSLPGQECQADTVALSKQEGHEDSQNPNKAPGAEQRD), 1047 to 1069 (PVCTSSPDQQIPATTPLPLSTDF), and 1125 to 1146 (PLSSHKQEDAPECLGPEPSLTD). The residue at position 441 (threonine 441) is a Phosphothreonine. Phosphoserine is present on residues serine 446 and serine 465. Residues 560-572 (DIPKFPRDSRVPV) are compositionally biased toward basic and acidic residues. Over residues 588–600 (SEEEEEEDLETDE) the composition is skewed to acidic residues. 5 stretches are compositionally biased toward polar residues: residues 703-714 (SGSNPGRLSESP), 820-831 (MQRAETRASTNA), 907-921 (NVSDLSKQGHLSSNS), 930-945 (GQSNFQNIQVPSTSLL), and 956-972 (PTASTLPDTSQLQSQVP). Residues 1049–1059 (CTSSPDQQIPA) show a composition bias toward polar residues. At threonine 1215 the chain carries Phosphothreonine. Phosphoserine occurs at positions 1219 and 1269. Positions 1250–1340 (RRQGPGGEGT…VGPSQGPGGS (91 aa)) are disordered. Positions 1276–1288 (PSPPPQPQPPAPP) are enriched in pro residues. Residues 1319-1333 (HPALLAAPHPGAVGP) show a composition bias toward low complexity.

In terms of tissue distribution, expressed in thymus, skeletal muscle, lung, testis, uterus, pancreas and heart and also expressed during embryogenesis.

May be a transforming oncogene with exchange activity for CDC42. May be a guanine-nucleotide exchange factor (GEF) for RAC1 and CDC42. Activated by the binding to subunits beta and gamma of the heterotrimeric guanine nucleotide-binding protein (G protein). Involved in the regulation of actin polymerization. The sequence is that of Pleckstrin homology domain-containing family G member 2 (Plekhg2) from Mus musculus (Mouse).